A 125-amino-acid polypeptide reads, in one-letter code: Large ribosomal subunit protein bL12 (125 aa).

The protein belongs to the bacterial ribosomal protein bL12 family. In terms of assembly, homodimer. Part of the ribosomal stalk of the 50S ribosomal subunit. Forms a multimeric L10(L12)X complex, where L10 forms an elongated spine to which 2 to 4 L12 dimers bind in a sequential fashion. Binds GTP-bound translation factors.

Forms part of the ribosomal stalk which helps the ribosome interact with GTP-bound translation factors. Is thus essential for accurate translation. This Nitrobacter winogradskyi (strain ATCC 25391 / DSM 10237 / CIP 104748 / NCIMB 11846 / Nb-255) protein is Large ribosomal subunit protein bL12.